Here is a 397-residue protein sequence, read N- to C-terminus: 3-ketoacyl-CoA thiolase, mitochondrial (397 aa).

The transit peptide at 1–16 (MALLRGVFIVAAKRTP) directs the protein to the mitochondrion; not cleaved. An N6-acetyllysine; alternate modification is found at K25. K25 is subject to N6-succinyllysine; alternate. S28 is modified (phosphoserine). K45 carries the post-translational modification N6-succinyllysine. C92 (acyl-thioester intermediate) is an active-site residue. The residue at position 119 (T119) is a Phosphothreonine. S121 carries the post-translational modification Phosphoserine. Y127 is modified (phosphotyrosine). T136 is subject to Phosphothreonine. N6-acetyllysine; alternate occurs at positions 137, 143, 158, 171, 191, and 209. N6-succinyllysine; alternate occurs at positions 137, 143, 158, 171, 191, and 209. Residues K211, K212, and K214 each carry the N6-succinyllysine modification. Positions 224 and 227 each coordinate CoA. K234 is subject to N6-acetyllysine; alternate. K234 carries the N6-succinyllysine; alternate modification. K240 carries the N6-succinyllysine modification. An N6-acetyllysine modification is found at K241. A CoA-binding site is contributed by S251. Residues K269 and K270 each carry the N6-acetyllysine modification. K305 carries the post-translational modification N6-acetyllysine; alternate. K305 is modified (N6-succinyllysine; alternate). S310 bears the Phosphoserine mark. K312 is modified (N6-acetyllysine; alternate). At K312 the chain carries N6-succinyllysine; alternate. K340 is modified (N6-acetyllysine). Residue S344 is modified to Phosphoserine. K375 carries the N6-acetyllysine modification. The Proton donor/acceptor role is filled by C382.

Belongs to the thiolase-like superfamily. Thiolase family. Homotetramer. Interacts with BNIP3.

It is found in the mitochondrion. It catalyses the reaction an acyl-CoA + acetyl-CoA = a 3-oxoacyl-CoA + CoA. The enzyme catalyses 2 acetyl-CoA = acetoacetyl-CoA + CoA. The catalysed reaction is acetyl-CoA + H2O = acetate + CoA + H(+). It carries out the reaction propanoyl-CoA + H2O = propanoate + CoA + H(+). It catalyses the reaction butanoyl-CoA + H2O = butanoate + CoA + H(+). The enzyme catalyses hexanoyl-CoA + H2O = hexanoate + CoA + H(+). The catalysed reaction is octanoyl-CoA + H2O = octanoate + CoA + H(+). It carries out the reaction decanoyl-CoA + H2O = decanoate + CoA + H(+). It catalyses the reaction dodecanoyl-CoA + H2O = dodecanoate + CoA + H(+). The enzyme catalyses tetradecanoyl-CoA + H2O = tetradecanoate + CoA + H(+). The catalysed reaction is hexadecanoyl-CoA + H2O = hexadecanoate + CoA + H(+). Its pathway is lipid metabolism; fatty acid beta-oxidation. Functionally, in the production of energy from fats, this is one of the enzymes that catalyzes the last step of the mitochondrial beta-oxidation pathway, an aerobic process breaking down fatty acids into acetyl-CoA. Using free coenzyme A/CoA, catalyzes the thiolytic cleavage of medium- to long-chain unbranched 3-oxoacyl-CoAs into acetyl-CoA and a fatty acyl-CoA shortened by two carbon atoms. Also catalyzes the condensation of two acetyl-CoA molecules into acetoacetyl-CoA and could be involved in the production of ketone bodies. Also displays hydrolase activity on various fatty acyl-CoAs. Thereby, could be responsible for the production of acetate in a side reaction to beta-oxidation. Abolishes BNIP3-mediated apoptosis and mitochondrial damage. The chain is 3-ketoacyl-CoA thiolase, mitochondrial (Acaa2) from Mus musculus (Mouse).